Consider the following 486-residue polypeptide: 6-phosphogluconate dehydrogenase, decarboxylating 2 (486 aa).

NADP(+)-binding positions include 12-17 (GLAVMG), 35-37 (NRT), 79-81 (VKA), and N107. Residues N107 and 133–135 (SGG) contribute to the substrate site. K188 acts as the Proton acceptor in catalysis. 191-192 (HN) lines the substrate pocket. The Proton donor role is filled by E195. Positions 196, 266, 293, 456, and 462 each coordinate substrate. Positions 484–486 (SKI) match the Microbody targeting signal motif.

This sequence belongs to the 6-phosphogluconate dehydrogenase family. As to quaternary structure, forms homodimer. Forms heterodimers with PGD1 or PGD3.

The protein resides in the cytoplasm. It localises to the cytosol. Its subcellular location is the peroxisome. The catalysed reaction is 6-phospho-D-gluconate + NADP(+) = D-ribulose 5-phosphate + CO2 + NADPH. It functions in the pathway carbohydrate degradation; pentose phosphate pathway; D-ribulose 5-phosphate from D-glucose 6-phosphate (oxidative stage): step 3/3. Catalyzes the oxidative decarboxylation of 6-phosphogluconate to ribulose 5-phosphate and CO(2), with concomitant reduction of NADP to NADPH. Required for guided growth of the male gametophytes and interaction between the pollen tube and the ovule. In Arabidopsis thaliana (Mouse-ear cress), this protein is 6-phosphogluconate dehydrogenase, decarboxylating 2.